Consider the following 384-residue polypeptide: Urea transporter 1 (384 aa).

The next 5 membrane-spanning stretches (helical) occupy residues 61–81, 85–105, 111–131, 138–158, and 168–188; these read ISQV…AGLL, PWWA…ALLL, AIAA…MAVF, FWWL…FSSA, and LPVF…ATGH. An N-linked (GlcNAc...) asparagine glycan is attached at N206. 4 consecutive transmembrane segments (helical) span residues 250–270, 279–299, 305–325, and 327–347; these read LMCL…LSLA, GLWG…FMAL, LLAL…THLM, and AVHL…FLLL.

Belongs to the urea transporter family. In terms of assembly, homotrimer; each subunit contains a pore through which urea permeates. Identified in a complex with STOM. As to expression, expressed in brain, spleen, kidney, testis and lung, with highest levels in brain.

Its subcellular location is the cell membrane. It localises to the basolateral cell membrane. The catalysed reaction is urea(in) = urea(out). In terms of biological role, mediates the transport of urea driven by a concentration gradient across the cell membrane. Mediates the transport of urea across the cell membranes of erythrocytes and the renal inner medullary collecting duct which is critical to the urinary concentrating mechanism. Facilitates water transport in erythrocytes. In Rattus norvegicus (Rat), this protein is Urea transporter 1 (Slc14a1).